Here is a 122-residue protein sequence, read N- to C-terminus: Small ribosomal subunit protein uS13 (122 aa).

A disordered region spans residues 89-122 (GLRHRRGLPARGQRTKTNARTRKGPRRGVAGKRK).

It belongs to the universal ribosomal protein uS13 family. In terms of assembly, part of the 30S ribosomal subunit. Forms a loose heterodimer with protein S19. Forms two bridges to the 50S subunit in the 70S ribosome.

Its function is as follows. Located at the top of the head of the 30S subunit, it contacts several helices of the 16S rRNA. In the 70S ribosome it contacts the 23S rRNA (bridge B1a) and protein L5 of the 50S subunit (bridge B1b), connecting the 2 subunits; these bridges are implicated in subunit movement. Contacts the tRNAs in the A and P-sites. This chain is Small ribosomal subunit protein uS13, found in Oleidesulfovibrio alaskensis (strain ATCC BAA-1058 / DSM 17464 / G20) (Desulfovibrio alaskensis).